A 56-amino-acid polypeptide reads, in one-letter code: UPF0434 protein ECH_0194 (56 aa).

The protein belongs to the UPF0434 family.

The protein is UPF0434 protein ECH_0194 of Ehrlichia chaffeensis (strain ATCC CRL-10679 / Arkansas).